The sequence spans 674 residues: DNA mismatch repair protein MutL (674 aa).

It belongs to the DNA mismatch repair MutL/HexB family.

This protein is involved in the repair of mismatches in DNA. It is required for dam-dependent methyl-directed DNA mismatch repair. May act as a 'molecular matchmaker', a protein that promotes the formation of a stable complex between two or more DNA-binding proteins in an ATP-dependent manner without itself being part of a final effector complex. This chain is DNA mismatch repair protein MutL, found in Clostridium perfringens (strain 13 / Type A).